The sequence spans 506 residues: MSLAIVHTRAALGVNAPPITIEVHISNGLPGLTMVGLPETTVKEARDRVRSAIINSGYEFPAKKITINLAPADLPKEGGRYDLPIAVALLAASEQLTASNLEAYELVGELALTGALRGVPGAISSATEAIRAGRNIIVATENAAEVGLISKEGCFIADHLQTVCAFLEGKHALERPLAQDMASPTATADLRDVIGQEQGKRGLEITAAGGHNLLLIGPPGTGKTMLASRLSGILPPLSNEEALESAAILSLVNADTVQKRWQQRPFRSPHHSASLTAMVGGGAIPAPGEISLAHNGILFLDELPEFERRTLDALREPIESGQIHLSRTRAKITYPARFQLIAAMNPSPTGHYQGNHNRCTPEQTLRYLNRLSGPFLDRFDLSLEIPLPPPGILSQHASKGESSATVKKRVIAAHERQYRRQKKLNARLEGREIQKYCVLHHDDARWLEDTLVHLGLSIRAWQRLLKVARTIADIELADQISRQHLQEAVSYRAIDRLLIHLQKLLA.

The protein belongs to the Mg-chelatase subunits D/I family. ComM subfamily.

This is an uncharacterized protein from Salmonella typhimurium (strain LT2 / SGSC1412 / ATCC 700720).